Reading from the N-terminus, the 933-residue chain is Isoleucine--tRNA ligase (933 aa).

A 'HIGH' region motif is present at residues 57–67 (PYANGNIHVGH). E554 provides a ligand contact to L-isoleucyl-5'-AMP. The 'KMSKS' region motif lies at 595–599 (KMSKS). K598 contacts ATP.

The protein belongs to the class-I aminoacyl-tRNA synthetase family. IleS type 1 subfamily. Monomer.

It localises to the cytoplasm. The catalysed reaction is tRNA(Ile) + L-isoleucine + ATP = L-isoleucyl-tRNA(Ile) + AMP + diphosphate. Functionally, catalyzes the attachment of isoleucine to tRNA(Ile). As IleRS can inadvertently accommodate and process structurally similar amino acids such as valine, to avoid such errors it has two additional distinct tRNA(Ile)-dependent editing activities. One activity is designated as 'pretransfer' editing and involves the hydrolysis of activated Val-AMP. The other activity is designated 'posttransfer' editing and involves deacylation of mischarged Val-tRNA(Ile). In Streptococcus pyogenes serotype M28 (strain MGAS6180), this protein is Isoleucine--tRNA ligase.